A 311-amino-acid chain; its full sequence is tRNA dimethylallyltransferase (311 aa).

An ATP-binding site is contributed by 9–16 (GPTAVGKT). Residue 11–16 (TAVGKT) coordinates substrate. Positions 34 to 37 (DSMQ) are interaction with substrate tRNA.

The protein belongs to the IPP transferase family. Monomer. It depends on Mg(2+) as a cofactor.

The enzyme catalyses adenosine(37) in tRNA + dimethylallyl diphosphate = N(6)-dimethylallyladenosine(37) in tRNA + diphosphate. Functionally, catalyzes the transfer of a dimethylallyl group onto the adenine at position 37 in tRNAs that read codons beginning with uridine, leading to the formation of N6-(dimethylallyl)adenosine (i(6)A). This chain is tRNA dimethylallyltransferase, found in Clostridium botulinum (strain Hall / ATCC 3502 / NCTC 13319 / Type A).